The following is a 585-amino-acid chain: Probable monoterpene synthase MTS1, chloroplastic (585 aa).

Positions 1–29 (MSLSGVPLSAGLAPSPSNKPTNGKGQNIV) are disordered. The transit peptide at 1–31 (MSLSGVPLSAGLAPSPSNKPTNGKGQNIVRR) directs the protein to the chloroplast. Over residues 15–25 (SPSNKPTNGKG) the composition is skewed to polar residues. 5 residues coordinate (2E)-geranyl diphosphate: Arg298, Asp335, Asp339, Arg476, and Asp479. Asp335 and Asp339 together coordinate Mg(2+). Residues 335–339 (DDIYD) carry the DDXXD motif motif. Mg(2+) is bound by residues Asp479, Thr483, and Glu487.

It belongs to the terpene synthase family. Tpsb subfamily. Mg(2+) is required as a cofactor. Requires Mn(2+) as cofactor. In terms of tissue distribution, expressed in trichomes. Detected in flowers, but not in leaves.

Its subcellular location is the plastid. The protein localises to the chloroplast. The sequence is that of Probable monoterpene synthase MTS1, chloroplastic from Humulus lupulus (European hop).